Consider the following 514-residue polypeptide: 2,3-bisphosphoglycerate-independent phosphoglycerate mutase (514 aa).

Mn(2+) contacts are provided by aspartate 14 and serine 64. Serine 64 (phosphoserine intermediate) is an active-site residue. Residues histidine 125, 155–156 (RD), arginine 187, arginine 193, 263–266 (RADR), and lysine 336 contribute to the substrate site. Residues aspartate 403, histidine 407, aspartate 444, histidine 445, and histidine 463 each coordinate Mn(2+).

The protein belongs to the BPG-independent phosphoglycerate mutase family. Monomer. Mn(2+) serves as cofactor.

It catalyses the reaction (2R)-2-phosphoglycerate = (2R)-3-phosphoglycerate. It functions in the pathway carbohydrate degradation; glycolysis; pyruvate from D-glyceraldehyde 3-phosphate: step 3/5. Functionally, catalyzes the interconversion of 2-phosphoglycerate and 3-phosphoglycerate. The protein is 2,3-bisphosphoglycerate-independent phosphoglycerate mutase of Shewanella sp. (strain W3-18-1).